A 487-amino-acid chain; its full sequence is Glutamyl-tRNA(Gln) amidotransferase subunit A (487 aa).

Active-site charge relay system residues include Lys78 and Ser153. The active-site Acyl-ester intermediate is Ser177.

This sequence belongs to the amidase family. GatA subfamily. In terms of assembly, heterotrimer of A, B and C subunits.

It catalyses the reaction L-glutamyl-tRNA(Gln) + L-glutamine + ATP + H2O = L-glutaminyl-tRNA(Gln) + L-glutamate + ADP + phosphate + H(+). Allows the formation of correctly charged Gln-tRNA(Gln) through the transamidation of misacylated Glu-tRNA(Gln) in organisms which lack glutaminyl-tRNA synthetase. The reaction takes place in the presence of glutamine and ATP through an activated gamma-phospho-Glu-tRNA(Gln). This is Glutamyl-tRNA(Gln) amidotransferase subunit A from Oenococcus oeni (strain ATCC BAA-331 / PSU-1).